The sequence spans 438 residues: Enolase (438 aa).

2 residues coordinate substrate: histidine 159 and glutamate 168. Catalysis depends on glutamate 211, which acts as the Proton donor. Mg(2+) contacts are provided by aspartate 246, glutamate 297, and aspartate 322. Substrate contacts are provided by glutamate 297 and aspartate 322. Lysine 347 functions as the Proton acceptor in the catalytic mechanism. Substrate contacts are provided by residues 374 to 377 (SHRS) and lysine 398.

This sequence belongs to the enolase family. As to quaternary structure, homodimer. Mg(2+) is required as a cofactor.

The protein resides in the cytoplasm. The catalysed reaction is (2R)-2-phosphoglycerate = phosphoenolpyruvate + H2O. The protein operates within carbohydrate degradation; glycolysis; pyruvate from D-glyceraldehyde 3-phosphate: step 4/5. The protein is Enolase (ENO1) of Cryphonectria parasitica (Chestnut blight fungus).